A 115-amino-acid chain; its full sequence is NADH-ubiquinone oxidoreductase chain 3 (115 aa).

The next 3 helical transmembrane spans lie at 4-24 (LTVLSVNIALSTCLITIAFWL), 55-75 (FFLVAITFLLFDLEIALLLPL), and 87-107 (MMLTAFILVSVLALGLAYEWM).

The protein belongs to the complex I subunit 3 family. As to quaternary structure, core subunit of respiratory chain NADH dehydrogenase (Complex I) which is composed of 45 different subunits. Interacts with TMEM186. Interacts with TMEM242.

It localises to the mitochondrion inner membrane. It catalyses the reaction a ubiquinone + NADH + 5 H(+)(in) = a ubiquinol + NAD(+) + 4 H(+)(out). Its function is as follows. Core subunit of the mitochondrial membrane respiratory chain NADH dehydrogenase (Complex I) which catalyzes electron transfer from NADH through the respiratory chain, using ubiquinone as an electron acceptor. Essential for the catalytic activity of complex I. In Peromyscus slevini (Slevin's mouse), this protein is NADH-ubiquinone oxidoreductase chain 3.